We begin with the raw amino-acid sequence, 289 residues long: (3R)-3-[(carboxymethyl)amino]fatty acid oxygenase/decarboxylase (289 aa).

Residues Tyr-65, Tyr-70, and Gly-93 each contribute to the a (3R)-3-[(carboxymethyl)amino]fatty acid site. Fe(2+) contacts are provided by His-97 and Asp-99. Positions 100 and 158 each coordinate a (3R)-3-[(carboxymethyl)amino]fatty acid. Fe(2+) is bound at residue His-260. His-264 provides a ligand contact to 2-oxoglutarate. A (3R)-3-[(carboxymethyl)amino]fatty acid is bound at residue Arg-275.

The protein belongs to the TfdA dioxygenase family. Fe(2+) is required as a cofactor.

It catalyses the reaction a (3R)-3-[(carboxymethyl)amino]fatty acid + 2 2-oxoglutarate + 2 O2 = a (3R)-3-isocyanyl-fatty acid + 2 succinate + 3 CO2 + 2 H2O. The catalysed reaction is a (3R)-3-[(carboxymethyl)amino]fatty acid + 2-oxoglutarate + O2 = a (3R)-3-{[carboxy(hydroxy)methyl]amino}fatty acid + succinate + CO2. The enzyme catalyses a (3R)-3-{[carboxy(hydroxy)methyl]amino}fatty acid + 2-oxoglutarate + O2 = a (3R)-3-isocyanyl-fatty acid + succinate + 2 CO2 + 2 H2O. Its function is as follows. Involved in the biosynthesis of a unique class of isonitrile lipopeptides (INLPs) that seem to play a role in metal acquisition in M.marinum. Catalyzes the conversion of (3R)-3-[(carboxymethyl)amino]fatty acids to (3R)-3-isocyanyl-fatty acids through an oxidative decarboxylation mechanism, thereby generating the isonitrile group of INLPs. This is (3R)-3-[(carboxymethyl)amino]fatty acid oxygenase/decarboxylase from Mycobacterium marinum (strain ATCC BAA-535 / M).